The chain runs to 264 residues: Diphthine synthase (264 aa).

Residues Leu10, Asp87, Val90, 115–116 (SI), Leu166, Ala209, and His234 contribute to the S-adenosyl-L-methionine site.

It belongs to the diphthine synthase family. As to quaternary structure, homodimer.

It catalyses the reaction 2-[(3S)-amino-3-carboxypropyl]-L-histidyl-[translation elongation factor 2] + 3 S-adenosyl-L-methionine = diphthine-[translation elongation factor 2] + 3 S-adenosyl-L-homocysteine + 3 H(+). Its pathway is protein modification; peptidyl-diphthamide biosynthesis. S-adenosyl-L-methionine-dependent methyltransferase that catalyzes the trimethylation of the amino group of the modified target histidine residue in translation elongation factor 2 (EF-2), to form an intermediate called diphthine. The three successive methylation reactions represent the second step of diphthamide biosynthesis. This is Diphthine synthase from Thermococcus onnurineus (strain NA1).